Here is a 96-residue protein sequence, read N- to C-terminus: DNA-directed RNA polymerase subunit Rpo11 (96 aa).

The protein belongs to the archaeal Rpo11/eukaryotic RPB11/RPC19 RNA polymerase subunit family. In terms of assembly, part of the RNA polymerase complex.

Its subcellular location is the cytoplasm. It catalyses the reaction RNA(n) + a ribonucleoside 5'-triphosphate = RNA(n+1) + diphosphate. DNA-dependent RNA polymerase (RNAP) catalyzes the transcription of DNA into RNA using the four ribonucleoside triphosphates as substrates. In Methanococcus maripaludis (strain C5 / ATCC BAA-1333), this protein is DNA-directed RNA polymerase subunit Rpo11.